A 565-amino-acid polypeptide reads, in one-letter code: Probable transcription factor lepB (565 aa).

Residues 52-259 (KRYAEDVTYL…PRNLDDRDLD (208 aa)) form a fungal specific transcription factor domain region.

Its subcellular location is the nucleus. In terms of biological role, probable transcription factor; part of the gene cluster 23 that mediates the biosynthesis of a family of 2-pyridones known as leporins. The polypeptide is Probable transcription factor lepB (Aspergillus flavus (strain ATCC 200026 / FGSC A1120 / IAM 13836 / NRRL 3357 / JCM 12722 / SRRC 167)).